Consider the following 251-residue polypeptide: Triosephosphate isomerase (251 aa).

Residue 9 to 11 coordinates substrate; that stretch reads NWK. The active-site Electrophile is His-95. Glu-167 functions as the Proton acceptor in the catalytic mechanism. Substrate contacts are provided by residues Gly-173, Ser-212, and 233 to 234; that span reads GG.

The protein belongs to the triosephosphate isomerase family. In terms of assembly, homodimer.

The protein resides in the cytoplasm. It catalyses the reaction D-glyceraldehyde 3-phosphate = dihydroxyacetone phosphate. The protein operates within carbohydrate biosynthesis; gluconeogenesis. It participates in carbohydrate degradation; glycolysis; D-glyceraldehyde 3-phosphate from glycerone phosphate: step 1/1. Functionally, involved in the gluconeogenesis. Catalyzes stereospecifically the conversion of dihydroxyacetone phosphate (DHAP) to D-glyceraldehyde-3-phosphate (G3P). The polypeptide is Triosephosphate isomerase (Pseudomonas putida (strain W619)).